A 252-amino-acid polypeptide reads, in one-letter code: 2-succinyl-6-hydroxy-2,4-cyclohexadiene-1-carboxylate synthase (252 aa).

This sequence belongs to the AB hydrolase superfamily. MenH family. Monomer.

The catalysed reaction is 5-enolpyruvoyl-6-hydroxy-2-succinyl-cyclohex-3-ene-1-carboxylate = (1R,6R)-6-hydroxy-2-succinyl-cyclohexa-2,4-diene-1-carboxylate + pyruvate. Its pathway is quinol/quinone metabolism; 1,4-dihydroxy-2-naphthoate biosynthesis; 1,4-dihydroxy-2-naphthoate from chorismate: step 3/7. It participates in quinol/quinone metabolism; menaquinone biosynthesis. Catalyzes a proton abstraction reaction that results in 2,5-elimination of pyruvate from 2-succinyl-5-enolpyruvyl-6-hydroxy-3-cyclohexene-1-carboxylate (SEPHCHC) and the formation of 2-succinyl-6-hydroxy-2,4-cyclohexadiene-1-carboxylate (SHCHC). In Escherichia coli (strain K12 / MC4100 / BW2952), this protein is 2-succinyl-6-hydroxy-2,4-cyclohexadiene-1-carboxylate synthase.